The primary structure comprises 167 residues: Phospholipase A2 inhibitor alpha-like protein (167 aa).

A signal peptide spans 1-19; it reads MQLILLSSLLLLGLSLANG. Residues 62 to 163 enclose the C-type lectin domain; that stretch reads GSERLYVTNK…CDEDLLVVCE (102 aa). Disulfide bonds link Cys83-Cys162 and Cys140-Cys154.

The protein belongs to the alpha-type phospholipase A2 inhibitor family. Homotrimer.

The protein localises to the secreted. In terms of biological role, has no PLA2 inhibitory activity. In Elaphe climacophora (Japanese rat snake), this protein is Phospholipase A2 inhibitor alpha-like protein.